The sequence spans 642 residues: Zinc finger protein 14 (642 aa).

Positions 4–76 (VSFEDVAVNF…MVERLCESRK (73 aa)) constitute a KRAB domain. A disordered region spans residues 77 to 99 (GSKCGETTSQMPNVNINKETSTG). Positions 81–99 (GETTSQMPNVNINKETSTG) are enriched in polar residues. The C2H2-type 1 zinc-finger motif lies at 103–125 (HECSFCGKDFMHHSSLNRHMRSH). The C2H2-type 2; degenerate zinc-finger motif lies at 141 to 163 (CKRKAVGKTFSYRHCVRKHERTH). Residues 169 to 191 (YECKQCGKAFIYYQPFQRHERIH) form a C2H2-type 3 zinc finger. The C2H2-type 4; atypical zinc-finger motif lies at 197–217 (YECKQCGKTFIYYQSFQKHAH). C2H2-type zinc fingers lie at residues 223–245 (YECK…ERTH), 251–273 (YECK…ERTH), 279–301 (YKCK…KRTH), 307–329 (YECK…VITH), 335–357 (YKCK…ERTH), 363–385 (YECK…ERTH), 391–413 (YECK…ETTH), 419–441 (YECK…ERTH), 447–469 (YECK…ERSH), 475–497 (YECK…ERTH), 503–525 (YECK…EKIH), 531–553 (FECK…ERTH), 559–581 (YQCK…ERTH), 587–609 (YRCK…ERSH), and 615–637 (YECK…ERTH).

Belongs to the krueppel C2H2-type zinc-finger protein family.

The protein resides in the nucleus. May be involved in transcriptional regulation. This is Zinc finger protein 14 (ZNF14) from Macaca fascicularis (Crab-eating macaque).